A 296-amino-acid chain; its full sequence is MTKKQLHLVIVTGMSGAGKTVAIQSFEDLGYFTIDNMPPALLPKFLQLVEIKEDNPKLALVVDMRSRSFFSEIQAVLDELENQDGLDFKILFLDAADKELVARYKETRRSHPLAADGRILDGIKLERELLAPLKNMSQNVVDTTELTPRELRKTLAEQFSDQEQAQSFRIEVMSFGFKYGIPIDADLVFDVRFLPNPYYLPELRNQTGVDEPVYDYVMNHPESEDFYQHLLALIEPILPSYQKEGKSVLTIAMGCTGGQHRSVAFAKRLVQDLSKNWSVNEGHRDKDRRKETVNRS.

13–20 lines the ATP pocket; the sequence is GMSGAGKT. 63–66 lines the GTP pocket; the sequence is DMRS.

The protein belongs to the RapZ-like family.

Functionally, displays ATPase and GTPase activities. This Streptococcus pneumoniae (strain CGSP14) protein is Nucleotide-binding protein SPCG_1551.